The chain runs to 360 residues: Phospho-N-acetylmuramoyl-pentapeptide-transferase (360 aa).

10 helical membrane passes run Arg24–Ile44, Gly69–Trp89, Trp92–Phe112, Met133–Asn153, Ile158–Val178, Gly199–Ser219, Val239–Tyr259, Val263–Ile283, Phe288–Val308, and Gln337–Leu357.

The protein belongs to the glycosyltransferase 4 family. MraY subfamily. The cofactor is Mg(2+).

Its subcellular location is the cell inner membrane. The enzyme catalyses UDP-N-acetyl-alpha-D-muramoyl-L-alanyl-gamma-D-glutamyl-meso-2,6-diaminopimeloyl-D-alanyl-D-alanine + di-trans,octa-cis-undecaprenyl phosphate = di-trans,octa-cis-undecaprenyl diphospho-N-acetyl-alpha-D-muramoyl-L-alanyl-D-glutamyl-meso-2,6-diaminopimeloyl-D-alanyl-D-alanine + UMP. The protein operates within cell wall biogenesis; peptidoglycan biosynthesis. Its function is as follows. Catalyzes the initial step of the lipid cycle reactions in the biosynthesis of the cell wall peptidoglycan: transfers peptidoglycan precursor phospho-MurNAc-pentapeptide from UDP-MurNAc-pentapeptide onto the lipid carrier undecaprenyl phosphate, yielding undecaprenyl-pyrophosphoryl-MurNAc-pentapeptide, known as lipid I. This chain is Phospho-N-acetylmuramoyl-pentapeptide-transferase, found in Neisseria meningitidis serogroup C / serotype 2a (strain ATCC 700532 / DSM 15464 / FAM18).